The chain runs to 119 residues: uncharacterized protein (119 aa).

Cys13 is an active-site residue.

It belongs to the ArsC family.

This is an uncharacterized protein from Escherichia coli (strain K12).